The chain runs to 303 residues: MSMILFASIVRVRDGLPLSASTDFYYAQEFLECRRQLKTLAQRLARHPGRGCAESCDFLIYFSSSGDVACMAICSRQCPAAMAFCFLEALWWDFIASYDTTCVGLASRPYAFLEFDSVIQKTKWHFNHMSSSQMKSGLEKIQEELEFQPPAVLSLEDTDVANGMLNGHTPVHSEPAPNLRMKPVTALGVLSLVLNIMCAALNLIRGVHLAEHSLQVAQEEVGNILAFFIPSVACIVQCYLYLFYSPARTLKVLLMLASICLGNAYLHGLRNTWQILFHVGVAFLSSYQILTRQLQERQSDYGV.

At 1–183 (MSMILFASIV…EPAPNLRMKP (183 aa)) the chain is on the cytoplasmic side. Residues 8-119 (SIVRVRDGLP…YAFLEFDSVI (112 aa)) enclose the Longin domain. Residues 184 to 204 (VTALGVLSLVLNIMCAALNLI) form a helical membrane-spanning segment. Residues 205–223 (RGVHLAEHSLQVAQEEVGN) lie on the Lumenal side of the membrane. The helical transmembrane segment at 224–244 (ILAFFIPSVACIVQCYLYLFY) threads the bilayer. Residues 245 to 248 (SPAR) are Cytoplasmic-facing. A helical transmembrane segment spans residues 249–269 (TLKVLLMLASICLGNAYLHGL). Arg-270 is a topological domain (lumenal). Residues 271-291 (NTWQILFHVGVAFLSSYQILT) traverse the membrane as a helical segment. Topologically, residues 292–303 (RQLQERQSDYGV) are cytoplasmic.

The protein belongs to the synaptobrevin family.

Its subcellular location is the endoplasmic reticulum membrane. Functionally, may be involved in vesicle transport between the ER and the Golgi complex. The sequence is that of Vesicle-trafficking protein SEC22c (Sec22c) from Mus musculus (Mouse).